The following is a 71-amino-acid chain: Small ribosomal subunit protein bS21 (71 aa).

The disordered stretch occupies residues 39–71 (EKPTQERKRKAAAAVKRQMRRTSRDVTKRKRLY). A compositionally biased stretch (basic residues) spans 45–71 (RKRKAAAAVKRQMRRTSRDVTKRKRLY).

The protein belongs to the bacterial ribosomal protein bS21 family.

The chain is Small ribosomal subunit protein bS21 from Xylella fastidiosa (strain M12).